The chain runs to 465 residues: Cysteine--tRNA ligase (465 aa).

C30 contacts Zn(2+). The 'HIGH' region signature appears at 32-42 (MTVYDYCHVGH). Zn(2+) contacts are provided by C214, H239, and E243. A 'KMSKS' region motif is present at residues 271–275 (KMSKS). K274 serves as a coordination point for ATP.

This sequence belongs to the class-I aminoacyl-tRNA synthetase family. Monomer. It depends on Zn(2+) as a cofactor.

The protein localises to the cytoplasm. It catalyses the reaction tRNA(Cys) + L-cysteine + ATP = L-cysteinyl-tRNA(Cys) + AMP + diphosphate. The chain is Cysteine--tRNA ligase from Ralstonia nicotianae (strain ATCC BAA-1114 / GMI1000) (Ralstonia solanacearum).